The primary structure comprises 439 residues: Lipid-A-disaccharide synthase (439 aa).

The protein belongs to the LpxB family.

It catalyses the reaction a lipid X + a UDP-2-N,3-O-bis[(3R)-3-hydroxyacyl]-alpha-D-glucosamine = a lipid A disaccharide + UDP + H(+). It participates in bacterial outer membrane biogenesis; LPS lipid A biosynthesis. Functionally, condensation of UDP-2,3-diacylglucosamine and 2,3-diacylglucosamine-1-phosphate to form lipid A disaccharide, a precursor of lipid A, a phosphorylated glycolipid that anchors the lipopolysaccharide to the outer membrane of the cell. This chain is Lipid-A-disaccharide synthase, found in Xanthomonas axonopodis pv. citri (strain 306).